Reading from the N-terminus, the 669-residue chain is DNA ligase (669 aa).

NAD(+)-binding positions include 34-38, 83-84, and Glu-113; these read DAEYD and SL. Residue Lys-115 is the N6-AMP-lysine intermediate of the active site. NAD(+) contacts are provided by Arg-136, Glu-170, Lys-286, and Lys-310. Cys-404, Cys-407, Cys-422, and Cys-427 together coordinate Zn(2+). Residues 591–669 form the BRCT domain; sequence IADSPFAGKT…EEALVKAISH (79 aa).

The protein belongs to the NAD-dependent DNA ligase family. LigA subfamily. The cofactor is Mg(2+). Mn(2+) serves as cofactor.

It catalyses the reaction NAD(+) + (deoxyribonucleotide)n-3'-hydroxyl + 5'-phospho-(deoxyribonucleotide)m = (deoxyribonucleotide)n+m + AMP + beta-nicotinamide D-nucleotide.. Its function is as follows. DNA ligase that catalyzes the formation of phosphodiester linkages between 5'-phosphoryl and 3'-hydroxyl groups in double-stranded DNA using NAD as a coenzyme and as the energy source for the reaction. It is essential for DNA replication and repair of damaged DNA. This is DNA ligase from Halalkalibacterium halodurans (strain ATCC BAA-125 / DSM 18197 / FERM 7344 / JCM 9153 / C-125) (Bacillus halodurans).